Here is a 264-residue protein sequence, read N- to C-terminus: GTP cyclohydrolase FolE2 (264 aa).

The protein belongs to the GTP cyclohydrolase IV family.

It carries out the reaction GTP + H2O = 7,8-dihydroneopterin 3'-triphosphate + formate + H(+). Its pathway is cofactor biosynthesis; 7,8-dihydroneopterin triphosphate biosynthesis; 7,8-dihydroneopterin triphosphate from GTP: step 1/1. Its function is as follows. Converts GTP to 7,8-dihydroneopterin triphosphate. The chain is GTP cyclohydrolase FolE2 from Nitratidesulfovibrio vulgaris (strain ATCC 29579 / DSM 644 / CCUG 34227 / NCIMB 8303 / VKM B-1760 / Hildenborough) (Desulfovibrio vulgaris).